The sequence spans 407 residues: Shaggy-related protein kinase iota (407 aa).

Residues 1–19 show a composition bias toward low complexity; it reads MASLPLGPQPHALAPPLQL. The segment at 1–23 is disordered; it reads MASLPLGPQPHALAPPLQLHDGD. At Ala-2 the chain carries N-acetylalanine. Residues 70 to 354 enclose the Protein kinase domain; sequence YMAERVVGTG…ALEACAHPFF (285 aa). ATP is bound by residues 76–84 and Lys-99; that span reads VGTGSFGIV. The active-site Proton acceptor is the Asp-195. Tyr-230 carries the post-translational modification Phosphotyrosine.

Belongs to the protein kinase superfamily. CMGC Ser/Thr protein kinase family. GSK-3 subfamily. In terms of assembly, binds to KIB1. Interacts with BSK6. Post-translationally, autophosphorylated mainly on threonine and serine residues.

It catalyses the reaction L-seryl-[protein] + ATP = O-phospho-L-seryl-[protein] + ADP + H(+). It carries out the reaction L-threonyl-[protein] + ATP = O-phospho-L-threonyl-[protein] + ADP + H(+). Functionally, phosphorylates BSK1, BSK3, BSK5, BSK6, BSK8 and BSK11 in vitro. May mediate extracellular signals to regulate transcription in differentiating cells. The chain is Shaggy-related protein kinase iota (ASK9) from Arabidopsis thaliana (Mouse-ear cress).